Here is a 225-residue protein sequence, read N- to C-terminus: 2-C-methyl-D-erythritol 4-phosphate cytidylyltransferase (225 aa).

The protein belongs to the IspD/TarI cytidylyltransferase family. IspD subfamily.

It catalyses the reaction 2-C-methyl-D-erythritol 4-phosphate + CTP + H(+) = 4-CDP-2-C-methyl-D-erythritol + diphosphate. Its pathway is isoprenoid biosynthesis; isopentenyl diphosphate biosynthesis via DXP pathway; isopentenyl diphosphate from 1-deoxy-D-xylulose 5-phosphate: step 2/6. Catalyzes the formation of 4-diphosphocytidyl-2-C-methyl-D-erythritol from CTP and 2-C-methyl-D-erythritol 4-phosphate (MEP). In Haemophilus influenzae (strain 86-028NP), this protein is 2-C-methyl-D-erythritol 4-phosphate cytidylyltransferase.